The following is a 117-amino-acid chain: Large ribosomal subunit protein bL19 (117 aa).

Belongs to the bacterial ribosomal protein bL19 family.

This protein is located at the 30S-50S ribosomal subunit interface and may play a role in the structure and function of the aminoacyl-tRNA binding site. The protein is Large ribosomal subunit protein bL19 of Aliivibrio salmonicida (strain LFI1238) (Vibrio salmonicida (strain LFI1238)).